The primary structure comprises 78 residues: Exodeoxyribonuclease 7 small subunit (78 aa).

This sequence belongs to the XseB family. In terms of assembly, heterooligomer composed of large and small subunits.

Its subcellular location is the cytoplasm. It catalyses the reaction Exonucleolytic cleavage in either 5'- to 3'- or 3'- to 5'-direction to yield nucleoside 5'-phosphates.. In terms of biological role, bidirectionally degrades single-stranded DNA into large acid-insoluble oligonucleotides, which are then degraded further into small acid-soluble oligonucleotides. This is Exodeoxyribonuclease 7 small subunit from Finegoldia magna (strain ATCC 29328 / DSM 20472 / WAL 2508) (Peptostreptococcus magnus).